The chain runs to 117 residues: Ig heavy chain V region 1-62-3 (117 aa).

The first 19 residues, 1–19 (MGWSCIMLFLAATATGVHF), serve as a signal peptide directing secretion. The interval 20-49 (QVQLQQPGAELVKPGASVKLSSKASGYTFT) is framework-1. The complementarity-determining-1 stretch occupies residues 50–54 (SYWMH). The framework-2 stretch occupies residues 55 to 68 (WVKQRPGRGLEWIG). A complementarity-determining-2 region spans residues 69 to 85 (RIDPNSGGTKYNEKFKS). The interval 86–117 (KATLTVDKPSSTAYMQLSSLTSEDSAVYYCAR) is framework-3.

This chain is Ig heavy chain V region 1-62-3 (Ighv1-62-3), found in Mus musculus (Mouse).